The sequence spans 96 residues: Aspartyl/glutamyl-tRNA(Asn/Gln) amidotransferase subunit C (96 aa).

The protein belongs to the GatC family. In terms of assembly, heterotrimer of A, B and C subunits.

It carries out the reaction L-glutamyl-tRNA(Gln) + L-glutamine + ATP + H2O = L-glutaminyl-tRNA(Gln) + L-glutamate + ADP + phosphate + H(+). The catalysed reaction is L-aspartyl-tRNA(Asn) + L-glutamine + ATP + H2O = L-asparaginyl-tRNA(Asn) + L-glutamate + ADP + phosphate + 2 H(+). Functionally, allows the formation of correctly charged Asn-tRNA(Asn) or Gln-tRNA(Gln) through the transamidation of misacylated Asp-tRNA(Asn) or Glu-tRNA(Gln) in organisms which lack either or both of asparaginyl-tRNA or glutaminyl-tRNA synthetases. The reaction takes place in the presence of glutamine and ATP through an activated phospho-Asp-tRNA(Asn) or phospho-Glu-tRNA(Gln). This Leptospira borgpetersenii serovar Hardjo-bovis (strain JB197) protein is Aspartyl/glutamyl-tRNA(Asn/Gln) amidotransferase subunit C.